A 611-amino-acid polypeptide reads, in one-letter code: MRPPWCPLYTPSLAAPILLLLLFLLGGGAEAEDPELLVTVRGGQLRGVRLMAPGGPVSAFLGIPFAEPPVGPRRFLPPEPKRPWPGVLDATAFQSVCYQYVDTLYPGFEGTEMWNPNRELSEDCLYLNVWTPYPRPASPTPVLVWIYGGGFYSGASSLDVYDGRFLAQAEGTVLVSMNYRVGAFGFLALPGSREAPGNVGLLDQRLALQWVQDNVATFGGDPMSVTLFGESAGAASVGMHLLSPPSRGLFHRAVLQSGAPNGPWATVGVGEARRRATLLARLVGCPPGGAGGNDTELVACLRTRPAQDLVDHEWHVLPQESVFRFSFVPVVDGDFLSDTPEALINAGDFHGLQVLVGVVKDEGSYFLVYGAPGFSKDNESLISRAQFLAGVRVGVPQASDLAAEAVVLHYTDWLNPEDPARLREAMSDVVGDHNVVCPVAQLAGRLAAQGARVYAYIFEHRASTLSWPLWMGVPHGYEIEFIFGLPLEPSLNYTAEERIFAQRLMRYWANFARTGDPNDPRDPKVPQWPPYTAGAQQYVSLDLRPLEVRRGLRAQACAFWNRFLPKLLSATDTLDEAERQWKAEFHRWSSYMVHWKNQFDHYSKQDRCSDL.

Positions 1 to 31 are cleaved as a signal peptide; it reads MRPPWCPLYTPSLAAPILLLLLFLLGGGAEA. Residues cysteine 97 and cysteine 124 are joined by a disulfide bond. Serine 231 acts as the Acyl-ester intermediate in catalysis. A disulfide bridge links cysteine 285 with cysteine 300. Residue asparagine 293 is glycosylated (N-linked (GlcNAc...) asparagine). Glutamate 362 (charge relay system) is an active-site residue. N-linked (GlcNAc...) asparagine glycosylation occurs at asparagine 378. Residues cysteine 437 and cysteine 557 are joined by a disulfide bond. Residue histidine 475 is the Charge relay system of the active site. An N-linked (GlcNAc...) asparagine glycan is attached at asparagine 492.

The protein belongs to the type-B carboxylesterase/lipase family. In terms of assembly, interacts with PRIMA1. The interaction with PRIMA1 is required to anchor it to the basal lamina of cells and organize into tetramers. Isoform H generates GPI-anchored dimers; disulfide linked. Isoform T generates multiple structures, ranging from monomers and dimers to collagen-tailed and hydrophobic-tailed forms, in which catalytic tetramers are associated with anchoring proteins that attach them to the basal lamina or to cell membranes. In the collagen-tailed forms, isoform T subunits are associated with a specific collagen, COLQ, which triggers the formation of isoform T tetramers, from monomers and dimers.

Its subcellular location is the synapse. The protein localises to the secreted. The protein resides in the cell membrane. It carries out the reaction acetylcholine + H2O = choline + acetate + H(+). Functionally, terminates signal transduction at the neuromuscular junction by rapid hydrolysis of the acetylcholine released into the synaptic cleft. The polypeptide is Acetylcholinesterase (ACHE) (Felis catus (Cat)).